The sequence spans 471 residues: ATP synthase subunit beta, chloroplastic (471 aa).

151–158 (GGAGVGKT) serves as a coordination point for ATP.

Belongs to the ATPase alpha/beta chains family. In terms of assembly, F-type ATPases have 2 components, CF(1) - the catalytic core - and CF(0) - the membrane proton channel. CF(1) has five subunits: alpha(3), beta(3), gamma(1), delta(1), epsilon(1). CF(0) has four main subunits: a(1), b(1), b'(1) and c(9-12).

It is found in the plastid. The protein localises to the chloroplast thylakoid membrane. It carries out the reaction ATP + H2O + 4 H(+)(in) = ADP + phosphate + 5 H(+)(out). In terms of biological role, produces ATP from ADP in the presence of a proton gradient across the membrane. The catalytic sites are hosted primarily by the beta subunits. The polypeptide is ATP synthase subunit beta, chloroplastic (Rhodomonas salina (Cryptomonas salina)).